The following is a 51-amino-acid chain: uncharacterized protein (51 aa).

This is an uncharacterized protein from Borreliella burgdorferi (strain ATCC 35210 / DSM 4680 / CIP 102532 / B31) (Borrelia burgdorferi).